A 130-amino-acid polypeptide reads, in one-letter code: Small ribosomal subunit protein uS8 (130 aa).

It belongs to the universal ribosomal protein uS8 family. Part of the 30S ribosomal subunit. Contacts proteins S5 and S12.

Functionally, one of the primary rRNA binding proteins, it binds directly to 16S rRNA central domain where it helps coordinate assembly of the platform of the 30S subunit. This chain is Small ribosomal subunit protein uS8, found in Opitutus terrae (strain DSM 11246 / JCM 15787 / PB90-1).